Here is a 534-residue protein sequence, read N- to C-terminus: N-acetylglutamate synthase, mitochondrial (534 aa).

The transit peptide at 1–18 (MATALMAVVLRAAAVAPR) directs the protein to the mitochondrion. The segment at 19–99 (LRGRGGTGGA…HESPEPPSGR (81 aa)) is disordered. Residues 19–376 (LRGRGGTGGA…SGTLFKNAER (358 aa)) are amino-acid kinase domain (AAK). A compositionally biased stretch (pro residues) spans 81–96 (VPSPRPPVPHESPEPP). In terms of domain architecture, N-acetyltransferase spans 375–526 (ERMLRVRSLD…HAKGLPDSFH (152 aa)). Substrate-binding positions include K401, K444, and 474-479 (RSRVTN).

The protein belongs to the acetyltransferase family. In terms of assembly, homodimer. Homotetramer. Post-translationally, probably processed by mitochondrial processing peptidase (MPP). The long form has not yet been isolated. In terms of tissue distribution, highly expressed in the adult liver, kidney and small intestine. Weakly expressed in the fetal liver, lung, pancreas, placenta, heart and brain tissue.

The protein resides in the mitochondrion matrix. The catalysed reaction is L-glutamate + acetyl-CoA = N-acetyl-L-glutamate + CoA + H(+). It functions in the pathway amino-acid biosynthesis; L-arginine biosynthesis; N(2)-acetyl-L-ornithine from L-glutamate: step 1/4. With respect to regulation, increased by L-arginine. Functionally, plays a role in the regulation of ureagenesis by producing the essential cofactor N-acetylglutamate (NAG), thus modulating carbamoylphosphate synthase I (CPS1) activity. The sequence is that of N-acetylglutamate synthase, mitochondrial (NAGS) from Homo sapiens (Human).